Reading from the N-terminus, the 170-residue chain is uncharacterized protein (170 aa).

A helical transmembrane segment spans residues Leu7 to Leu27.

The protein localises to the membrane. This is an uncharacterized protein from Haemophilus influenzae (strain ATCC 51907 / DSM 11121 / KW20 / Rd).